Here is a 483-residue protein sequence, read N- to C-terminus: Protein PLASTID TRANSCRIPTIONALLY ACTIVE 14 (483 aa).

The N-terminal 62 residues, 1-62, are a transit peptide targeting the chloroplast; sequence MASSVSLQFL…TQPFPLFQSP (62 aa). Positions 80–325 constitute an SET domain; sequence YKIGYVRSVR…KGEEMTINYM (246 aa). Tyr324 serves as a coordination point for S-adenosyl-L-methionine.

Belongs to the class V-like SAM-binding methyltransferase superfamily. As to quaternary structure, component of the transcriptionally active chromosome (TAC) complexes. Interacts with PTAC12/HMR/PAP5 and PTAC7. Binds to SL1/MTERF3. Mostly expressed in leaves, flowers and seedlings, and, to a lower extent, in stems and roots.

It is found in the plastid. The protein resides in the chloroplast thylakoid. In terms of biological role, essential for chloroplast development, especially for thylakoid formation. Involved in plastid gene expression, probably by maintaining plastid-encoded RNA polymerase (PEP) activity. The sequence is that of Protein PLASTID TRANSCRIPTIONALLY ACTIVE 14 from Arabidopsis thaliana (Mouse-ear cress).